A 358-amino-acid chain; its full sequence is DNA polymerase IV (358 aa).

The UmuC domain maps to 4–185; the sequence is IIHIDMDCYF…LPLIKIPGVG (182 aa). Mg(2+)-binding residues include Asp8 and Asp103. The active site involves Glu104.

This sequence belongs to the DNA polymerase type-Y family. Monomer. The cofactor is Mg(2+).

It is found in the cytoplasm. The catalysed reaction is DNA(n) + a 2'-deoxyribonucleoside 5'-triphosphate = DNA(n+1) + diphosphate. In terms of biological role, poorly processive, error-prone DNA polymerase involved in untargeted mutagenesis. Copies undamaged DNA at stalled replication forks, which arise in vivo from mismatched or misaligned primer ends. These misaligned primers can be extended by PolIV. Exhibits no 3'-5' exonuclease (proofreading) activity. May be involved in translesional synthesis, in conjunction with the beta clamp from PolIII. This chain is DNA polymerase IV, found in Shewanella denitrificans (strain OS217 / ATCC BAA-1090 / DSM 15013).